Consider the following 343-residue polypeptide: MKTLLKNRELSAFLAILALFGVLVALNPAYLSFQTLGMIFASSQILILLALGAALVMLTRNIDVSVGSTVGLCAIAVGVALNNGYSLPVSMLFALAIGALAGAFNGLLVVGLRIPAIVATLGTLGLYRGAMLLWTGGKWIEGLPSSLKSLSEPVALGVSPLGMAVLFLVLIGAWTLSRTVSGRDFYAVGDNLAAARQLGVAVNRTRMLAFTINGMLAACAGIVFASQIGFVPNQTGSGLEMKAIAACVLGGISLLGGTGTLIGAFLGAFFLTQIDTVLVLFRLPAWWNDFIAGLVLLGVLVLDGRLRQALTRHQRALKYSRFQPGNKGGKHVTPFPKRKKEVA.

Helical transmembrane passes span 13 to 33, 38 to 58, 61 to 81, 92 to 112, 114 to 134, 154 to 174, 212 to 232, 251 to 271, and 283 to 303; these read FLAILALFGVLVALNPAYLSF, MIFASSQILILLALGAALVML, NIDVSVGSTVGLCAIAVGVAL, LFALAIGALAGAFNGLLVVGL, IPAIVATLGTLGLYRGAMLLW, VALGVSPLGMAVLFLVLIGAW, INGMLAACAGIVFASQIGFVP, GISLLGGTGTLIGAFLGAFFL, and LPAWWNDFIAGLVLLGVLVLD. The interval 321 to 343 is disordered; it reads RFQPGNKGGKHVTPFPKRKKEVA.

Belongs to the binding-protein-dependent transport system permease family. AraH/RbsC subfamily. As to quaternary structure, the complex is composed of two ATP-binding proteins (LsrA), two transmembrane proteins (LsrC and LsrD) and a solute-binding protein (LsrB).

It localises to the cell inner membrane. Part of the ABC transporter complex LsrABCD involved in autoinducer 2 (AI-2) import. Probably responsible for the translocation of the substrate across the membrane. The polypeptide is Autoinducer 2 import system permease protein LsrC (lsrC) (Enterobacter sp. (strain 638)).